We begin with the raw amino-acid sequence, 198 residues long: ATP-dependent Clp protease proteolytic subunit (198 aa).

Ser-98 acts as the Nucleophile in catalysis. His-123 is a catalytic residue.

This sequence belongs to the peptidase S14 family. Fourteen ClpP subunits assemble into 2 heptameric rings which stack back to back to give a disk-like structure with a central cavity, resembling the structure of eukaryotic proteasomes.

It localises to the cytoplasm. The catalysed reaction is Hydrolysis of proteins to small peptides in the presence of ATP and magnesium. alpha-casein is the usual test substrate. In the absence of ATP, only oligopeptides shorter than five residues are hydrolyzed (such as succinyl-Leu-Tyr-|-NHMec, and Leu-Tyr-Leu-|-Tyr-Trp, in which cleavage of the -Tyr-|-Leu- and -Tyr-|-Trp bonds also occurs).. In terms of biological role, cleaves peptides in various proteins in a process that requires ATP hydrolysis. Has a chymotrypsin-like activity. Plays a major role in the degradation of misfolded proteins. This Listeria innocua serovar 6a (strain ATCC BAA-680 / CLIP 11262) protein is ATP-dependent Clp protease proteolytic subunit.